The chain runs to 140 residues: Nucleoside diphosphate kinase (140 aa).

ATP-binding residues include lysine 11, phenylalanine 59, arginine 87, threonine 93, arginine 104, and asparagine 114. The active-site Pros-phosphohistidine intermediate is histidine 117.

It belongs to the NDK family. Homotetramer. The cofactor is Mg(2+).

Its subcellular location is the cytoplasm. The catalysed reaction is a 2'-deoxyribonucleoside 5'-diphosphate + ATP = a 2'-deoxyribonucleoside 5'-triphosphate + ADP. It carries out the reaction a ribonucleoside 5'-diphosphate + ATP = a ribonucleoside 5'-triphosphate + ADP. Its function is as follows. Major role in the synthesis of nucleoside triphosphates other than ATP. The ATP gamma phosphate is transferred to the NDP beta phosphate via a ping-pong mechanism, using a phosphorylated active-site intermediate. In Novosphingobium aromaticivorans (strain ATCC 700278 / DSM 12444 / CCUG 56034 / CIP 105152 / NBRC 16084 / F199), this protein is Nucleoside diphosphate kinase.